We begin with the raw amino-acid sequence, 562 residues long: NAD-dependent malic enzyme (562 aa).

The Proton donor role is filled by tyrosine 101. Residue arginine 154 participates in NAD(+) binding. Lysine 172 acts as the Proton acceptor in catalysis. A divalent metal cation contacts are provided by glutamate 243, aspartate 244, and aspartate 267. Residues aspartate 267 and asparagine 415 each coordinate NAD(+).

Belongs to the malic enzymes family. Homotetramer. Mg(2+) serves as cofactor. Requires Mn(2+) as cofactor.

The catalysed reaction is (S)-malate + NAD(+) = pyruvate + CO2 + NADH. It catalyses the reaction oxaloacetate + H(+) = pyruvate + CO2. This chain is NAD-dependent malic enzyme, found in Shewanella baltica (strain OS223).